Consider the following 164-residue polypeptide: Crossover junction endodeoxyribonuclease RuvC (164 aa).

Catalysis depends on residues Asp-7, Glu-67, and Asp-139. 3 residues coordinate Mg(2+): Asp-7, Glu-67, and Asp-139.

It belongs to the RuvC family. As to quaternary structure, homodimer which binds Holliday junction (HJ) DNA. The HJ becomes 2-fold symmetrical on binding to RuvC with unstacked arms; it has a different conformation from HJ DNA in complex with RuvA. In the full resolvosome a probable DNA-RuvA(4)-RuvB(12)-RuvC(2) complex forms which resolves the HJ. Requires Mg(2+) as cofactor.

The protein resides in the cytoplasm. The catalysed reaction is Endonucleolytic cleavage at a junction such as a reciprocal single-stranded crossover between two homologous DNA duplexes (Holliday junction).. In terms of biological role, the RuvA-RuvB-RuvC complex processes Holliday junction (HJ) DNA during genetic recombination and DNA repair. Endonuclease that resolves HJ intermediates. Cleaves cruciform DNA by making single-stranded nicks across the HJ at symmetrical positions within the homologous arms, yielding a 5'-phosphate and a 3'-hydroxyl group; requires a central core of homology in the junction. The consensus cleavage sequence is 5'-(A/T)TT(C/G)-3'. Cleavage occurs on the 3'-side of the TT dinucleotide at the point of strand exchange. HJ branch migration catalyzed by RuvA-RuvB allows RuvC to scan DNA until it finds its consensus sequence, where it cleaves and resolves the cruciform DNA. This chain is Crossover junction endodeoxyribonuclease RuvC, found in Citrifermentans bemidjiense (strain ATCC BAA-1014 / DSM 16622 / JCM 12645 / Bem) (Geobacter bemidjiensis).